The sequence spans 211 residues: Large ribosomal subunit protein uL3 (211 aa).

Belongs to the universal ribosomal protein uL3 family. Part of the 50S ribosomal subunit. Forms a cluster with proteins L14 and L19.

One of the primary rRNA binding proteins, it binds directly near the 3'-end of the 23S rRNA, where it nucleates assembly of the 50S subunit. The chain is Large ribosomal subunit protein uL3 from Akkermansia muciniphila (strain ATCC BAA-835 / DSM 22959 / JCM 33894 / BCRC 81048 / CCUG 64013 / CIP 107961 / Muc).